The sequence spans 188 residues: Elongation factor P (188 aa).

This sequence belongs to the elongation factor P family.

The protein resides in the cytoplasm. It participates in protein biosynthesis; polypeptide chain elongation. In terms of biological role, involved in peptide bond synthesis. Stimulates efficient translation and peptide-bond synthesis on native or reconstituted 70S ribosomes in vitro. Probably functions indirectly by altering the affinity of the ribosome for aminoacyl-tRNA, thus increasing their reactivity as acceptors for peptidyl transferase. The sequence is that of Elongation factor P from Caulobacter vibrioides (strain ATCC 19089 / CIP 103742 / CB 15) (Caulobacter crescentus).